The chain runs to 481 residues: Alkaline protease secretion protein AprF (481 aa).

Residues 462–481 are disordered; the sequence is PAPLHTLSKTDTEENRSALN. The segment covering 469 to 481 has biased composition (basic and acidic residues); it reads SKTDTEENRSALN.

Belongs to the outer membrane factor (OMF) (TC 1.B.17) family.

Its subcellular location is the cell outer membrane. Functionally, involved in the secretion of alkaline protease. The chain is Alkaline protease secretion protein AprF (aprF) from Pseudomonas aeruginosa (strain ATCC 15692 / DSM 22644 / CIP 104116 / JCM 14847 / LMG 12228 / 1C / PRS 101 / PAO1).